The following is a 334-amino-acid chain: Lipoyl synthase (334 aa).

The tract at residues 8 to 33 (LNNDTRPKVEAPARPRHPEKAHRPDT) is disordered. Residues 12–33 (TRPKVEAPARPRHPEKAHRPDT) show a composition bias toward basic and acidic residues. Residues C68, C73, C79, C94, C98, C101, and S307 each coordinate [4Fe-4S] cluster. One can recognise a Radical SAM core domain in the interval 80–296 (WEKRHATFMI…ETTAYAKGFL (217 aa)).

It belongs to the radical SAM superfamily. Lipoyl synthase family. The cofactor is [4Fe-4S] cluster.

It is found in the cytoplasm. The enzyme catalyses [[Fe-S] cluster scaffold protein carrying a second [4Fe-4S](2+) cluster] + N(6)-octanoyl-L-lysyl-[protein] + 2 oxidized [2Fe-2S]-[ferredoxin] + 2 S-adenosyl-L-methionine + 4 H(+) = [[Fe-S] cluster scaffold protein] + N(6)-[(R)-dihydrolipoyl]-L-lysyl-[protein] + 4 Fe(3+) + 2 hydrogen sulfide + 2 5'-deoxyadenosine + 2 L-methionine + 2 reduced [2Fe-2S]-[ferredoxin]. The protein operates within protein modification; protein lipoylation via endogenous pathway; protein N(6)-(lipoyl)lysine from octanoyl-[acyl-carrier-protein]: step 2/2. In terms of biological role, catalyzes the radical-mediated insertion of two sulfur atoms into the C-6 and C-8 positions of the octanoyl moiety bound to the lipoyl domains of lipoate-dependent enzymes, thereby converting the octanoylated domains into lipoylated derivatives. This is Lipoyl synthase from Methylorubrum populi (strain ATCC BAA-705 / NCIMB 13946 / BJ001) (Methylobacterium populi).